A 414-amino-acid chain; its full sequence is Putative nickel insertion protein (414 aa).

A disordered region spans residues 70-91 (ATHHDHDHSQDQTHHHHADHAP).

Belongs to the LarC family.

This chain is Putative nickel insertion protein, found in Picosynechococcus sp. (strain ATCC 27264 / PCC 7002 / PR-6) (Agmenellum quadruplicatum).